The sequence spans 207 residues: N-(5'-phosphoribosyl)anthranilate isomerase (207 aa).

The protein belongs to the TrpF family.

It carries out the reaction N-(5-phospho-beta-D-ribosyl)anthranilate = 1-(2-carboxyphenylamino)-1-deoxy-D-ribulose 5-phosphate. It functions in the pathway amino-acid biosynthesis; L-tryptophan biosynthesis; L-tryptophan from chorismate: step 3/5. The chain is N-(5'-phosphoribosyl)anthranilate isomerase from Halorhodospira halophila (strain DSM 244 / SL1) (Ectothiorhodospira halophila (strain DSM 244 / SL1)).